The primary structure comprises 56 residues: Large ribosomal subunit protein bL33 (56 aa).

Belongs to the bacterial ribosomal protein bL33 family.

The sequence is that of Large ribosomal subunit protein bL33 from Histophilus somni (strain 129Pt) (Haemophilus somnus).